A 715-amino-acid polypeptide reads, in one-letter code: Polyribonucleotide nucleotidyltransferase (715 aa).

Mg(2+)-binding residues include Asp-500 and Asp-506. The KH domain maps to 567 to 634 (PKVKMIRINP…AYIESLVREA (68 aa)). One can recognise an S1 motif domain in the interval 637–712 (GELYEAKVTR…ERGRVDLSRK (76 aa)).

Belongs to the polyribonucleotide nucleotidyltransferase family. It depends on Mg(2+) as a cofactor.

It localises to the cytoplasm. The enzyme catalyses RNA(n+1) + phosphate = RNA(n) + a ribonucleoside 5'-diphosphate. Functionally, involved in mRNA degradation. Catalyzes the phosphorolysis of single-stranded polyribonucleotides processively in the 3'- to 5'-direction. The polypeptide is Polyribonucleotide nucleotidyltransferase (Acholeplasma laidlawii (strain PG-8A)).